A 207-amino-acid chain; its full sequence is Glutathione S-transferase 3 (207 aa).

The 78-residue stretch at 2 to 79 (VHYKLTYFNA…YLARKFGFVG (78 aa)) folds into the GST N-terminal domain. Residues Y8, K43, 49–51 (GQV), and 63–64 (QS) each bind glutathione. The GST C-terminal domain maps to 81-207 (TAEEELQADE…WLAKRPETRF (127 aa)).

It belongs to the GST superfamily. Sigma family.

It catalyses the reaction RX + glutathione = an S-substituted glutathione + a halide anion + H(+). In terms of biological role, conjugation of reduced glutathione to a wide number of exogenous and endogenous hydrophobic electrophiles. This chain is Glutathione S-transferase 3 (gst-3), found in Caenorhabditis elegans.